Consider the following 152-residue polypeptide: Transcriptional regulator MraZ (152 aa).

SpoVT-AbrB domains follow at residues 5–52 (ATLV…TLPE) and 81–124 (ASEC…DEQV).

This sequence belongs to the MraZ family. In terms of assembly, forms oligomers.

It localises to the cytoplasm. The protein resides in the nucleoid. Its function is as follows. Negatively regulates its own expression and that of the subsequent genes in the proximal part of the division and cell wall (dcw) gene cluster. Acts by binding directly to DNA. May also regulate the expression of genes outside the dcw cluster. The protein is Transcriptional regulator MraZ of Proteus mirabilis (strain HI4320).